A 622-amino-acid chain; its full sequence is Probable ATP-dependent RNA helicase DDX41 (622 aa).

Residues 1–15 show a composition bias toward basic and acidic residues; it reads MEESEPERKRARTDE. Disordered regions lie at residues 1-39 and 52-84; these read MEES…YVPL and QRRR…PQSN. Serine 4 bears the Phosphoserine mark. N6-acetyllysine is present on lysine 9. Residue lysine 9 forms a Glycyl lysine isopeptide (Lys-Gly) (interchain with G-Cter in ubiquitin) linkage. Phosphoserine occurs at positions 21 and 23. The residue at position 33 (tyrosine 33) is a Phosphotyrosine. Residue lysine 115 forms a Glycyl lysine isopeptide (Lys-Gly) (interchain with G-Cter in ubiquitin) linkage. Positions 181–209 match the Q motif motif; sequence KSFKEMKFPAAILRGLKKKGIHHPTPIQI. A Helicase ATP-binding domain is found at 212–396; that stretch reads IPTILSGRDM…KSALVKPVTI (185 aa). An ATP-binding site is contributed by 225 to 232; that stretch reads AFTGSGKT. Residues 344–347 carry the DEAD box motif; it reads DEAD. The Helicase C-terminal domain occupies 407–567; it reads DVIQEVEYVK…KVPPVLQVLH (161 aa). At tyrosine 414 the chain carries Phosphotyrosine; by BTK. Residues lysine 416 and lysine 442 each participate in a glycyl lysine isopeptide (Lys-Gly) (interchain with G-Cter in SUMO2) cross-link. The CCHC-type zinc-finger motif lies at 580-597; that stretch reads RGCAFCGGLGHRITDCPK.

The protein belongs to the DEAD box helicase family. DDX41 subfamily. As to quaternary structure, identified in the spliceosome C complex. Interacts with ERCC6. Interacts with FAM50A. Interacts with STING1. Interacts with CGAS. Interacts with several spliceosomes components such as PRP19 or CDC5L. In terms of processing, acetylation at Lys-9 regulates the nuclear/cytoplasmic localization. Phosphorylated by BTK; phosphorylation induces binding to dsDNA and STING1. Post-translationally, 'Lys-48'-linked ubiquitinated and degraded by TRIM21 leading to negative regulation of the innate immune response to intracellular dsDNA.

It is found in the nucleus. The protein localises to the cytoplasm. It catalyses the reaction ATP + H2O = ADP + phosphate + H(+). Its function is as follows. Multifunctional protein that participates in many aspects of cellular RNA metabolism. Plays pivotal roles in innate immune sensing and hematopoietic homeostasis. Recognizes foreign or self-nucleic acids generated during microbial infection, thereby initiating anti-pathogen responses. Mechanistically, phosphorylation by BTK allows binding to dsDNA leading to interaction with STING1. Modulates the homeostasis of dsDNA through its ATP-dependent DNA-unwinding activity and ATP-independent strand-annealing activity. In turn, induces STING1-mediated type I interferon and cytokine responses to DNA and DNA viruses. Selectively modulates the transcription of certain immunity-associated genes by regulating their alternative splicing. Binds to RNA (R)-loops, structures consisting of DNA/RNA hybrids and a displaced strand of DNA that occur during transcription, and prevents their accumulation, thereby maintaining genome stability. Also participates in pre-mRNA splicing, translational regulation and snoRNA processing, which is essential for ribosome biogenesis. This is Probable ATP-dependent RNA helicase DDX41 (DDX41) from Homo sapiens (Human).